A 359-amino-acid chain; its full sequence is Membrane-bound lytic murein transglycosylase C (359 aa).

The first 16 residues, 1-16 (MKKYLALALIAPLLIS), serve as a signal peptide directing secretion. The N-palmitoyl cysteine moiety is linked to residue Cys17. Cys17 carries S-diacylglycerol cysteine lipidation.

Belongs to the transglycosylase Slt family.

The protein resides in the cell outer membrane. It carries out the reaction Exolytic cleavage of the (1-&gt;4)-beta-glycosidic linkage between N-acetylmuramic acid (MurNAc) and N-acetylglucosamine (GlcNAc) residues in peptidoglycan, from either the reducing or the non-reducing ends of the peptidoglycan chains, with concomitant formation of a 1,6-anhydrobond in the MurNAc residue.. Murein-degrading enzyme. May play a role in recycling of muropeptides during cell elongation and/or cell division. This is Membrane-bound lytic murein transglycosylase C from Escherichia coli O81 (strain ED1a).